The following is a 1062-amino-acid chain: Histone H3-lysine(4) N-trimethyltransferase ATX1 (1062 aa).

The tract at residues 159-184 (NAFSGNKQNGSSRRKGSSSKNQDKAT) is disordered. Residues 301–365 (PGDIVWAKLA…VKQAISFIKG (65 aa)) enclose the PWWP domain. Positions 401–424 (QLQKGADSVDSDMANSTEEGNSGG) are disordered. Residues 441-500 (DFRHIIGDLLIINLGKVVTDSQFFKDENHIWPEGYTAMRKFTSLTDHSASALYKMEVLRD) form the FYR N-terminal domain. The FYR C-terminal domain occupies 504 to 586 (KTHPLFIVTA…RPSSHVSMCK (83 aa)). The Phorbol-ester/DAG-type zinc finger occupies 591-647 (RHQNQPTGYRPVRVDWKDLDKCNVCHMDEEYENNLFLQCDKCRMMVHAKCYGELEPC). Residues 599–1062 (YRPVRVDWKD…RCDLIDWTAE (464 aa)) form an interaction with PIP5 region. The PHD-type 1 zinc finger occupies 609-660 (LDKCNVCHMDEEYENNLFLQCDKCRMMVHAKCYGELEPCDGALWLCNLCRPG). A C2HC pre-PHD-type zinc finger spans residues 665–698 (PPRCCLCPVVGGAMKPTTDGRWAHLACAIWIPET). A PHD-type 2 zinc finger spans residues 722–785 (LMCTICGVSY…RMLSFCKRHR (64 aa)). Residues 898–1016 (KRLAFGKSGI…KWEELTYDYR (119 aa)) enclose the SET domain. Histidine 908 is a binding site for S-adenosyl-L-methionine. Serine 947 is a glycosylation site (O-linked (GlcNAc) serine). S-adenosyl-L-methionine-binding positions include tyrosine 954 and 977–978 (NH). Zn(2+) contacts are provided by cysteine 980, cysteine 1026, cysteine 1028, and cysteine 1033. The 17-residue stretch at 1022–1038 (ERLSCSCGFPGCRGVVN) folds into the Post-SET domain.

The protein belongs to the class V-like SAM-binding methyltransferase superfamily. Histone-lysine methyltransferase family. TRX/MLL subfamily. In terms of assembly, interacts with PIP5. Interacts with WDR5A. Binds to CLF in the nucleus. Interacts with NRPB1 CTD domain, especially when NRPB1 is phosphorylated on 'Ser-5' of the heptapeptide repeat. Component of a nuclear protein complex containing at least TATA binding proteins (TBPs, e.g. TBP1 and TBP2) and ATX1. Associates with ULT1 for trimethylating 'Lys-4' on histone H3 (H3K4me3) at flower MADS box gene loci. Interacts with SEC. Interacts with A4/EF1A in the cytoplasm on the nuclear periphery. Post-translationally, activated via O-glycosylation by SEC; this modification triggers FLC locus H3K4me3 histone modification, thus preventing premature flowering. As to expression, strongly expressed in cotyledons, but weak levels in the first true leaves, except at the hydothodes. Ubiquitous with higher levels in dividing tissues, including inflorescence meristem and flower primordia. Expressed also in leaves (especially at hydathodes), in growing inflorescence stems and in the mature flowers. Strongly expressed in young seedlings.

The protein resides in the nucleus. Its subcellular location is the cytoplasm. The protein localises to the perinuclear region. The enzyme catalyses L-lysyl(4)-[histone H3] + 3 S-adenosyl-L-methionine = N(6),N(6),N(6)-trimethyl-L-lysyl(4)-[histone H3] + 3 S-adenosyl-L-homocysteine + 3 H(+). It catalyses the reaction L-lysyl-[protein] + 3 S-adenosyl-L-methionine = N(6),N(6),N(6)-trimethyl-L-lysyl-[protein] + 3 S-adenosyl-L-homocysteine + 3 H(+). Functionally, binds to the promoter and regulates the transcription of target genes, maintaining them in an active state; at promoters, required for TATA binding proteins (TBPs, e.g. TBP1 and TBP2) and RNA polymerase II (Pol II) recruitment, and, in a subsequent event, is recruited by a phosphorylated form of Pol II to the +300-bp region of transcribed sequences to trimethylates nucleosomes. Histone trimethyltransferase that trimethylates 'Lys-4' of histone H3 (H3K4me3); H3 'Lys-4' methylation represents a specific tag for epigenetic transcriptional activation and is required for efficient elongation of transcription but not for transcription initiation. Methylates only a limited fraction of nucleosomes of target genes (e.g. FLC, NAP, XTH33 and WRKY70). Necessary for WDR5A occupancy at WRKY70 and LTP7 genes. Required to maintain the active state of class A (AP1 and AP2), class B (PI and AP3) and class C (AG, AGAMOUS) floral homeotic genes at early stages of flower development. Together with CLF, modulates AG nucleosome methylation statement. Involved in epigenetic regulation (e.g. H3K4me3) of the floral repressors FLC, FT and SOC1 to prevent the transition from vegetative to reproductive development, independently of the photoperiod; binds the active FLC locus before flowering, but this interaction is released upon the transition to flowering. Regulates floral organ identity and flowering transition. Functions as a receptor for the lipid messenger phosphatidylinositol 5-phosphate (PI5P), which negatively regulates its transcriptional activation activity. Exhibits histone methylase activity and subsequent transcriptional regulation on WRKY70 gene, and, to a lower extent on secondary defense-response targets salicylic acid (SA)-responsive gene PR1 and jasmonic acid (JA)-responsive gene THI2.1. Involved in response to dehydration stress-response in both abscisic acid (ABA)-dependent and ABA-independent pathways; this includes specific genes (e.g. COR15A, ADH1, CBF4, RD29A, RD29B, RD26, ABF3, NCED3 and ABA3) epigenetic regulation (e.g. H3K4me3 and Pol II recruitment) to promote their transcription and influence ABA production. Implicated in stomatal closure regulation. Indirect repressor of XTH genes (XTH33). Necessary for the phosphorylation of Pol II NRPB1 (e.g. Ser5P and Ser2P) at the promoters of target genes, thus regulating both early and late stages of transcription. Controls root growth and architecture by regulating the timing of root development, stem cell niche maintenance (e.g. quiescent center (QC)), and cell patterning during primary and lateral root development. Modulates cell cycle duration, cell production, and the transition from cell proliferation in the root apical meristem (RAM) to cell elongation. Trimethylates A4/EF1A post-translationally at Lys-396. Required for actin cytoskeleton organization. The chain is Histone H3-lysine(4) N-trimethyltransferase ATX1 from Arabidopsis thaliana (Mouse-ear cress).